The sequence spans 346 residues: Syntaxin UFE1 (346 aa).

Residues 1–324 (MMSDLTPIFR…RKAKRAAGRT (324 aa)) are Cytoplasmic-facing. The region spanning 255–317 (LNQKNEQLKK…KKGNKELRKA (63 aa)) is the t-SNARE coiled-coil homology domain. Residues 325-342 (AKMTTYGAIIMGVFILFL) traverse the membrane as a helical; Anchor for type IV membrane protein segment. Residues 343–346 (DYVG) lie on the Lumenal side of the membrane.

It belongs to the syntaxin family. As to quaternary structure, component of a SNARE complex consisting of UFE1, USE1, SEC20 and SEC22 or YKT6.

It localises to the endoplasmic reticulum membrane. Functionally, syntaxin required for targeting and fusion of Golgi-derived retrograde transport vesicles with the ER. The protein is Syntaxin UFE1 (UFE1) of Saccharomyces cerevisiae (strain ATCC 204508 / S288c) (Baker's yeast).